The following is a 262-amino-acid chain: [LysW]-aminoadipate/[LysW]-glutamate kinase (262 aa).

Substrate-binding positions include 35 to 36, R62, and N167; that span reads GG.

The protein belongs to the acetylglutamate kinase family. LysZ subfamily.

It localises to the cytoplasm. The catalysed reaction is [amino-group carrier protein]-C-terminal-N-(1,4-dicarboxybutan-1-yl)-L-glutamine + ATP = [amino-group carrier protein]-C-terminal-N-(1-carboxy-5-phosphooxy-5-oxopentan-1-yl)-L-glutamine + ADP. It carries out the reaction [amino-group carrier protein]-C-terminal-gamma-(L-glutamyl)-L-glutamate + ATP = [amino-group carrier protein]-C-terminal-gamma-(5-phospho-L-glutamyl)-L-glutamate + ADP. It functions in the pathway amino-acid biosynthesis; L-lysine biosynthesis via AAA pathway; L-lysine from L-alpha-aminoadipate (Thermus route): step 2/5. It participates in amino-acid biosynthesis; L-arginine biosynthesis. Functionally, involved in both the arginine and lysine biosynthetic pathways. Phosphorylates the LysW-bound precursors glutamate (for arginine biosynthesis), respectively alpha-aminoadipate (for lysine biosynthesis). The polypeptide is [LysW]-aminoadipate/[LysW]-glutamate kinase (Metallosphaera sedula (strain ATCC 51363 / DSM 5348 / JCM 9185 / NBRC 15509 / TH2)).